A 113-amino-acid polypeptide reads, in one-letter code: Large ribosomal subunit protein uL22 (113 aa).

This sequence belongs to the universal ribosomal protein uL22 family. As to quaternary structure, part of the 50S ribosomal subunit.

Its function is as follows. This protein binds specifically to 23S rRNA; its binding is stimulated by other ribosomal proteins, e.g. L4, L17, and L20. It is important during the early stages of 50S assembly. It makes multiple contacts with different domains of the 23S rRNA in the assembled 50S subunit and ribosome. The globular domain of the protein is located near the polypeptide exit tunnel on the outside of the subunit, while an extended beta-hairpin is found that lines the wall of the exit tunnel in the center of the 70S ribosome. The sequence is that of Large ribosomal subunit protein uL22 from Bacillus subtilis (strain 168).